We begin with the raw amino-acid sequence, 639 residues long: Protein P1 (639 aa).

A signal peptide spans 1-20; it reads MNRFTAYAALFFMFSLCSTA. The next 3 helical transmembrane spans lie at 121–141, 144–164, and 172–192; these read AASVTLWAIINIWFGLYWTLA, ITLFLWTFSIEALCLILLGCI, and ALSLSEHLPVFLFMSPLKIIW. Positions 207–399 constitute a Peptidase S39 domain; sequence VEGYKGFSVP…GITSPNYVFE (193 aa). Residues histidine 255, aspartate 286, and serine 354 each act as for protease activity in the active site. Disordered regions lie at residues 455–515 and 539–639; these read ATNA…PPMD and VSRV…NSKA. Positions 463–488 are enriched in polar residues; sequence TAQTNSAEKTAPSTSAEKTALTNKPL. Residues 548 to 561 show a composition bias toward basic residues; that stretch reads QKPKQKKRGRRGGK. The span at 566–577 shows a compositional bias: polar residues; it reads SLPPTSTQSTSG. Low complexity predominate over residues 587–602; sequence ASGSAGTSRATTTPAP.

The protein belongs to the peptidase S39B family. In terms of processing, specific enzymatic cleavages in vivo yield mature proteins. The protease probably cleaves itself and releases the VPg protein. The VPg protein is probably further cleaved in its C-terminus.

The protein resides in the membrane. Functionally, precursor from which the VPg molecule is probably released at the onset of the RNA synthesis. Essential for virus replication. Participates, together with the proteins P0 and P7, in the inhibition of the induction of aphid-induced host phytohormones. This could play a role in the attraction to the infected plants by aphids. In Solanum tuberosum (Potato), this protein is Protein P1.